The sequence spans 279 residues: Urease accessory protein UreD (279 aa).

This sequence belongs to the UreD family. As to quaternary structure, ureD, UreF and UreG form a complex that acts as a GTP-hydrolysis-dependent molecular chaperone, activating the urease apoprotein by helping to assemble the nickel containing metallocenter of UreC. The UreE protein probably delivers the nickel.

Its subcellular location is the cytoplasm. Its function is as follows. Required for maturation of urease via the functional incorporation of the urease nickel metallocenter. The polypeptide is Urease accessory protein UreD (Nostoc sp. (strain PCC 7120 / SAG 25.82 / UTEX 2576)).